Consider the following 191-residue polypeptide: MCFSRADAADNYPFGTCQQRKLFPHFHPPNLIGNKFVPLRGSPHRGPGCYFSDGYGLAYDLSKIPTSIKGYTLGARTAVRFKPIQKEMTPHAGRYQKVSPQQEKHKQNFAPFNVLVPRFKNYPKDTYYPSPGAYNPEKKPPPKIAWPMKFGSPDWAQVPCLQKRTLKAELSTDKDFRKHRNRVAYLSLYYN.

As to quaternary structure, interacts with proteins involved in ciliary transport, including ARL13B, CETN1, KIF3A, RAB6A, RAB8A, TUBB1 and TUBG1. Interacts with AURKA.

It localises to the cytoplasmic vesicle. The protein resides in the golgi apparatus. The protein localises to the trans-Golgi network. It is found in the cytoplasm. Functionally, during primary cilia disassembly, involved in cilia disassembly. Required specifically to control cilia retraction as well as the liberation and duplication of the basal body/centrosome. May act by stimulating AURKA activity at the basal body in a cell cycle-dependent manner. In Homo sapiens (Human), this protein is Ciliary microtubule-associated protein 3.